The primary structure comprises 295 residues: MKQTTINHSVELVGIGLHKGVPVKLVLEPLGENQGIVFYRSDLGVNLPLKPENIVDTKMATVLGKDNARISTIEHLLSAVHAYGIDNLKISVDNEEIPIMDGSALTYCMLLDEAGIKELDAPKKVMEIKQAVEIRESDKFVKIEPDSQLSLNFTIDFNHPVIAKQAHHFVFSKTAYKEQVAKARTFGFLQEVNYLRSIGLAKGGSLNNCIVLDENSILNKEGLRCEKEFVCHKILDAMGDLMVLGMPVMGKYTSFSGSHKLNSMLVKAILADAKNYEVLIAADPAKEFALQKAFA.

Zn(2+) is bound by residues His75, His232, and Asp236. His259 serves as the catalytic Proton donor.

It belongs to the LpxC family. It depends on Zn(2+) as a cofactor.

It catalyses the reaction a UDP-3-O-[(3R)-3-hydroxyacyl]-N-acetyl-alpha-D-glucosamine + H2O = a UDP-3-O-[(3R)-3-hydroxyacyl]-alpha-D-glucosamine + acetate. It participates in glycolipid biosynthesis; lipid IV(A) biosynthesis; lipid IV(A) from (3R)-3-hydroxytetradecanoyl-[acyl-carrier-protein] and UDP-N-acetyl-alpha-D-glucosamine: step 2/6. Functionally, catalyzes the hydrolysis of UDP-3-O-myristoyl-N-acetylglucosamine to form UDP-3-O-myristoylglucosamine and acetate, the committed step in lipid A biosynthesis. This chain is UDP-3-O-acyl-N-acetylglucosamine deacetylase, found in Helicobacter pylori (strain ATCC 700392 / 26695) (Campylobacter pylori).